The following is a 461-amino-acid chain: V-type ATP synthase beta chain (461 aa).

The protein belongs to the ATPase alpha/beta chains family.

Functionally, produces ATP from ADP in the presence of a proton gradient across the membrane. The V-type beta chain is a regulatory subunit. This chain is V-type ATP synthase beta chain, found in Clostridium botulinum (strain 657 / Type Ba4).